Here is a 490-residue protein sequence, read N- to C-terminus: MANKPRTRWVLPYKTKNVEDNYFLGQVLGQGQFGTTFLCTHKQTGQKLACKSIPKRKLLCQEDYDDVLREIQIMHHLSEYPNVVRIESAYEDTKNVHLVMELCEGGELFDRIVKRGHYSEREAAKLIKTIVGVVEACHSLGVVHRDLKPENFLFSSSDEDASLKSTDFGLSVFCTPGEAFSELVGSAYYVAPEVLHKHYGPECDVWSAGVILYILLCGFPPFWAESEIGIFRKILQGKLEFEINPWPSISESAKDLIKKMLESNPKKRLTAHQVLCHPWIVDDKVAPDKPLDCAVVSRLKKFSAMNKLKKMALRVIAERLSEEEIGGLKELFKMIDTDKSGTITFEELKDSMRRVGSELMESEIQELLRAADVDESGTIDYGEFLAATIHLNKLEREENLVAAFSFFDKDASGYITIEELQQAWKEFGINDSNLDEMIKDIDQDNDGQIDYGEFVAMMRKGNGTGGGIGRRTMRNSLNFGTTLPDESMNV.

Residues 22–280 (YFLGQVLGQG…AHQVLCHPWI (259 aa)) form the Protein kinase domain. ATP is bound by residues 28 to 36 (LGQGQFGTT) and Lys-51. The active-site Proton acceptor is Asp-146. Position 186 is a phosphoserine (Ser-186). The tract at residues 286–316 (APDKPLDCAVVSRLKKFSAMNKLKKMALRVI) is autoinhibitory domain. EF-hand domains are found at residues 323 to 358 (EEIGGLKELFKMIDTDKSGTITFEELKDSMRRVGSE), 359 to 394 (LMESEIQELLRAADVDESGTIDYGEFLAATIHLNKL), 395 to 430 (EREENLVAAFSFFDKDASGYITIEELQQAWKEFGIN), and 434 to 464 (LDEMIKDIDQDNDGQIDYGEFVAMMRKGNGT). Residues Asp-336, Asp-338, Ser-340, Thr-342, Glu-347, Asp-372, Asp-374, Ser-376, Thr-378, Glu-383, Asp-408, Asp-410, Ser-412, Tyr-414, Glu-419, Asp-442, Asp-444, Asp-446, Gln-448, and Glu-453 each contribute to the Ca(2+) site.

It belongs to the protein kinase superfamily. Ser/Thr protein kinase family. CDPK subfamily. As to quaternary structure, interacts weakly with DI19. As to expression, ubiquitously expressed.

It catalyses the reaction L-seryl-[protein] + ATP = O-phospho-L-seryl-[protein] + ADP + H(+). It carries out the reaction L-threonyl-[protein] + ATP = O-phospho-L-threonyl-[protein] + ADP + H(+). Activated by calcium. Autophosphorylation may play an important role in the regulation of the kinase activity. Functionally, may play a role in signal transduction pathways that involve calcium as a second messenger. The polypeptide is Calcium-dependent protein kinase 12 (CPK12) (Arabidopsis thaliana (Mouse-ear cress)).